We begin with the raw amino-acid sequence, 430 residues long: MTGSLTCRRKGPLRGSIEVPGDKSISHRALLFGALSTGETRVRGLLDAEDVHATRRAVEALGATVRAEGEELVVVPPPALREPGDVVDCGNSGTSLRLLTGVLSGVPGLSILTGDASLRRRPVRRVIEPLRRMGADLSARDGDRLPPVVVRGRPLRGARHVLEVASAQVKSACLLAGLFAEGETTVVEPERSRDHTERMLAGMGVPVRVDGLEVTVAPARPRGGRVDVPGDISSAAFFLCAAAALPGSEVTVRNLGVNPTRTGLLDVLGAMGAALSRANEREVAGEPRADVTVRAAALHGTEIGGAIIPRLIDELPVVMVMATQARGRTVIRDAKELRVKESDRLASMGEALARAGAKIELFEDGCAIEGPTPLRGVAVQTRLDHRIAMSMAVAQLLAGGEEVVLDDVACVATSFPSFFALLDGLCEGGA.

3-phosphoshikimate-binding residues include Lys-23, Ser-24, and Arg-28. Lys-23 lines the phosphoenolpyruvate pocket. Phosphoenolpyruvate contacts are provided by Gly-93 and Arg-121. 4 residues coordinate 3-phosphoshikimate: Ser-166, Gln-168, Asp-313, and Lys-340. A phosphoenolpyruvate-binding site is contributed by Gln-168. The active-site Proton acceptor is Asp-313. 2 residues coordinate phosphoenolpyruvate: Arg-344 and Arg-386.

It belongs to the EPSP synthase family. In terms of assembly, monomer.

It localises to the cytoplasm. The enzyme catalyses 3-phosphoshikimate + phosphoenolpyruvate = 5-O-(1-carboxyvinyl)-3-phosphoshikimate + phosphate. The protein operates within metabolic intermediate biosynthesis; chorismate biosynthesis; chorismate from D-erythrose 4-phosphate and phosphoenolpyruvate: step 6/7. Its function is as follows. Catalyzes the transfer of the enolpyruvyl moiety of phosphoenolpyruvate (PEP) to the 5-hydroxyl of shikimate-3-phosphate (S3P) to produce enolpyruvyl shikimate-3-phosphate and inorganic phosphate. This Anaeromyxobacter sp. (strain Fw109-5) protein is 3-phosphoshikimate 1-carboxyvinyltransferase.